Here is a 523-residue protein sequence, read N- to C-terminus: Exodeoxyribonuclease 7 large subunit (523 aa).

The interval 502–523 is disordered; it reads PGASPAARTRAGKAKADQGSLF.

This sequence belongs to the XseA family. Heterooligomer composed of large and small subunits.

The protein resides in the cytoplasm. The catalysed reaction is Exonucleolytic cleavage in either 5'- to 3'- or 3'- to 5'-direction to yield nucleoside 5'-phosphates.. Its function is as follows. Bidirectionally degrades single-stranded DNA into large acid-insoluble oligonucleotides, which are then degraded further into small acid-soluble oligonucleotides. The protein is Exodeoxyribonuclease 7 large subunit of Rhodospirillum centenum (strain ATCC 51521 / SW).